The chain runs to 145 residues: Transcription antitermination protein NusB (145 aa).

The protein belongs to the NusB family.

Involved in transcription antitermination. Required for transcription of ribosomal RNA (rRNA) genes. Binds specifically to the boxA antiterminator sequence of the ribosomal RNA (rrn) operons. This is Transcription antitermination protein NusB from Acetivibrio thermocellus (strain ATCC 27405 / DSM 1237 / JCM 9322 / NBRC 103400 / NCIMB 10682 / NRRL B-4536 / VPI 7372) (Clostridium thermocellum).